Reading from the N-terminus, the 400-residue chain is MGRAKKVVLAYSGGVDTSVCIPYLKQEWGVEEVITLAADLGQGDELEPIREKALKSGASESLVADVKDSFVKDYAFGAIQANALYENRYPLGTALARPLIAKILVETAEKYGADAIAHGCTGKGNDQVRFDVSVTALNPNLKILAPAREWGMSREETIAYGEKFGIPSPVKKSSPYSIDKNLLGRSIEAGLLEDPSFEPPEEIYEMTKAIADTPNEPEYIKIGFHGGIPTTLNGIAKQPVELIEELNQLVGNHGVGRIDMIENRLVGIKSREIYESPAMLVLIQAHRDLESLTLTADVTHYKRGIEETYSQIVYNGLWYSPLKVALDAFIQKTQERVSGTVRVKLFKGNSTIVGRSSDSSLYTPDLATYGADDQFDHKAAEGFIYVWGLPTRIWSRQIKS.

ATP-binding positions include 10-18 (AYSGGVDTS) and A38. Y89 serves as a coordination point for L-citrulline. G119 is a binding site for ATP. Positions 121, 125, and 126 each coordinate L-aspartate. N125 is a binding site for L-citrulline. Positions 129, 177, 186, 262, and 274 each coordinate L-citrulline.

The protein belongs to the argininosuccinate synthase family. Type 1 subfamily. In terms of assembly, homotetramer.

It localises to the cytoplasm. The catalysed reaction is L-citrulline + L-aspartate + ATP = 2-(N(omega)-L-arginino)succinate + AMP + diphosphate + H(+). It participates in amino-acid biosynthesis; L-arginine biosynthesis; L-arginine from L-ornithine and carbamoyl phosphate: step 2/3. This chain is Argininosuccinate synthase, found in Nostoc punctiforme (strain ATCC 29133 / PCC 73102).